Consider the following 372-residue polypeptide: Aminomethyltransferase (372 aa).

The protein belongs to the GcvT family. In terms of assembly, the glycine cleavage system is composed of four proteins: P, T, L and H.

The enzyme catalyses N(6)-[(R)-S(8)-aminomethyldihydrolipoyl]-L-lysyl-[protein] + (6S)-5,6,7,8-tetrahydrofolate = N(6)-[(R)-dihydrolipoyl]-L-lysyl-[protein] + (6R)-5,10-methylene-5,6,7,8-tetrahydrofolate + NH4(+). The glycine cleavage system catalyzes the degradation of glycine. This is Aminomethyltransferase from Burkholderia orbicola (strain MC0-3).